The chain runs to 194 residues: Protein GrpE (194 aa).

Residues 1–12 (MNKQKNNRERTP) are compositionally biased toward basic and acidic residues. Positions 1–44 (MNKQKNNRERTPQPEQDTERDEQLTNSHENDIDSAPAAEENDKV) are disordered.

Belongs to the GrpE family. As to quaternary structure, homodimer.

Its subcellular location is the cytoplasm. In terms of biological role, participates actively in the response to hyperosmotic and heat shock by preventing the aggregation of stress-denatured proteins, in association with DnaK and GrpE. It is the nucleotide exchange factor for DnaK and may function as a thermosensor. Unfolded proteins bind initially to DnaJ; upon interaction with the DnaJ-bound protein, DnaK hydrolyzes its bound ATP, resulting in the formation of a stable complex. GrpE releases ADP from DnaK; ATP binding to DnaK triggers the release of the substrate protein, thus completing the reaction cycle. Several rounds of ATP-dependent interactions between DnaJ, DnaK and GrpE are required for fully efficient folding. The polypeptide is Protein GrpE (Porphyromonas gingivalis (strain ATCC 33277 / DSM 20709 / CIP 103683 / JCM 12257 / NCTC 11834 / 2561)).